A 325-amino-acid chain; its full sequence is Forkhead box protein B1 (325 aa).

Positions 12-103 (QKPPYSYISL…GDMFENGSFL (92 aa)) form a DNA-binding region, fork-head. Residues 284–309 (LSNSPPSLSPTSSQTATSQSSPATPS) show a composition bias toward low complexity. The disordered stretch occupies residues 284 to 325 (LSNSPPSLSPTSSQTATSQSSPATPSETLTSPASALHSVAVH).

Expressed widespread in the early developing ventricular zone of the neural tube and later restricted to areas of the spinal cord, hindbrain, thalamus and hypothalamus. Expressed in epithelial cells of developing and adult mammary glands.

It is found in the nucleus. Functionally, transcription factor expressed by neural progenitor cells in specific regions of the embryonic neuroepithelium. Essential for the mammillary nuclei maintenance. Negatively regulates the proliferation of oligodendrocyte progenitors and promotes oligodendrocyte maturation. Also expressed in mammary glands, plays a role in lactation, controls development of mammary glands and the inferior colliculi of the midbrain in the central nervous system that regulates the milk-ejection reflex. In Mus musculus (Mouse), this protein is Forkhead box protein B1 (Foxb1).